The sequence spans 961 residues: IQ motif and SEC7 domain-containing protein 1 (961 aa).

The segment at 21–113 is disordered; it reads SGVEGEAPSS…SLSESYELSS (93 aa). Residues 29 to 38 show a composition bias toward polar residues; sequence SSETGTSLDS. A phosphoserine mark is found at serine 88, serine 104, and serine 106. An IQ domain is found at 133–162; it reads TRHAARTIQTAFRQYQMNKNFERLRSSMSE. Phosphoserine is present on residues serine 179, serine 247, and serine 251. 3 disordered regions span residues 263–291, 310–332, and 347–515; these read SEEV…HRKL, LSPP…DLRL, and KEDK…DSPA. The segment covering 272–291 has biased composition (basic and acidic residues); that stretch reads ARARDTEPKPGLHGMDHRKL. 2 stretches are compositionally biased toward basic and acidic residues: residues 364-374 and 428-444; these read ERPEPRLRVEH and LPRE…RPLE. Low complexity predominate over residues 469 to 487; it reads DSINSTSNSNDTINCSSES. A phosphoserine mark is found at serine 510 and serine 513. The SEC7 domain occupies 515–708; that stretch reads AFSNDVIRKR…IGIYERIRKR (194 aa). The PH domain maps to 772–864; sequence HQREIFLFND…LRESVAEVQE (93 aa). Positions 846–877 form a coiled coil; that stretch reads QDRKKFTDDLRESVAEVQEMEKHRIESELEKQ. The residue at position 890 (serine 890) is a Phosphoserine. Residue tyrosine 909 is modified to Phosphotyrosine. A disordered region spans residues 920 to 961; sequence LSSSLRDLSEAGKRGRRSSAGSLESNVEFQPFQPPQPPVLCS. Serine 922 and serine 923 each carry phosphoserine. Polar residues predominate over residues 938–947; that stretch reads SAGSLESNVE. Positions 951–961 are enriched in pro residues; sequence FQPPQPPVLCS.

It belongs to the BRAG family. Interacts with ARF1 and ARF6. Interacts with GRIA2; the interaction is required for ARF6 activation. In terms of tissue distribution, expressed in hippocampus.

The protein resides in the cytoplasm. The protein localises to the nucleus. It localises to the postsynaptic density. It is found in the cytoplasmic vesicle. Its subcellular location is the secretory vesicle. The protein resides in the synaptic vesicle. Its function is as follows. Guanine nucleotide exchange factor for ARF1 and ARF6. Guanine nucleotide exchange factor activity is enhanced by lipid binding. Accelerates GTP binding by ARFs of all three classes. Guanine nucleotide exchange protein for ARF6, mediating internalization of beta-1 integrin. Involved in neuronal development. In neurons, plays a role in the control of vesicle formation by endocytoc cargo. Upon long term depression, interacts with GRIA2 and mediates the activation of ARF6 to internalize synaptic AMPAR receptors. The sequence is that of IQ motif and SEC7 domain-containing protein 1 (Iqsec1) from Mus musculus (Mouse).